Here is a 414-residue protein sequence, read N- to C-terminus: Transforming growth factor beta-2 proprotein (414 aa).

The N-terminal stretch at 1–20 (MHYCVLSTFLLLHLVPVALS) is a signal peptide. Residues Asn-72, Asn-140, and Asn-241 are each glycosylated (N-linked (GlcNAc...) asparagine). 4 cysteine pairs are disulfide-bonded: Cys-309/Cys-318, Cys-317/Cys-380, Cys-346/Cys-411, and Cys-350/Cys-413.

It belongs to the TGF-beta family. Interacts with the serine proteases, HTRA1 and HTRA3. Interacts with ASPN. Interacts with MFAP5. As to quaternary structure, interacts with Transforming growth factor beta-2 (TGF-beta-2) chain; interaction is non-covalent and maintains (TGF-beta-2) in a latent state. Interacts with LRRC32/GARP; leading to regulate activation of TGF-beta-2. Interacts with NREP; the interaction results in a decrease in TGFB2 autoinduction. In terms of assembly, transforming growth factor beta-2: Homodimer; disulfide-linked. Transforming growth factor beta-2: Interacts with TGF-beta receptors (TGFBR1 and TGFBR2), leading to signal transduction. In terms of processing, the precursor proprotein is cleaved in the Golgi apparatus to form Transforming growth factor beta-2 (TGF-beta-2) and Latency-associated peptide (LAP) chains, which remain non-covalently linked, rendering TGF-beta-2 inactive.

The protein resides in the secreted. It is found in the extracellular space. It localises to the extracellular matrix. Functionally, precursor of the Latency-associated peptide (LAP) and Transforming growth factor beta-2 (TGF-beta-2) chains, which constitute the regulatory and active subunit of TGF-beta-2, respectively. Its function is as follows. Required to maintain the Transforming growth factor beta-2 (TGF-beta-2) chain in a latent state during storage in extracellular matrix. Associates non-covalently with TGF-beta-2 and regulates its activation via interaction with 'milieu molecules', such as LTBP1 and LRRC32/GARP, that control activation of TGF-beta-2. Multifunctional protein that regulates various processes such as angiogenesis and heart development. Activation into mature form follows different steps: following cleavage of the proprotein in the Golgi apparatus, Latency-associated peptide (LAP) and Transforming growth factor beta-2 (TGF-beta-2) chains remain non-covalently linked rendering TGF-beta-2 inactive during storage in extracellular matrix. At the same time, LAP chain interacts with 'milieu molecules', such as LTBP1 and LRRC32/GARP, that control activation of TGF-beta-2 and maintain it in a latent state during storage in extracellular milieus. Once activated following release of LAP, TGF-beta-2 acts by binding to TGF-beta receptors (TGFBR1 and TGFBR2), which transduce signal. This chain is Transforming growth factor beta-2 proprotein (Tgfb2), found in Mus musculus (Mouse).